The sequence spans 206 residues: MNNEDKKLQDEQLQKETVEAAETVSAEEEFVEITAEEMQIARIAELEAALLSSDAKVKEAQDNVLRARAEGENVRRRSEVEIDKARKFALNKFTEELLPVIDNLERAIETADKNDEALKSMIEGVELTLKTMTATVEKFGLKQHNPVGEVFNPEFHQAMSIQESADHEPNTVMLVMQKGYELNGRIIRPAMVMVSKAAAGSVDMQA.

Basic and acidic residues predominate over residues 1–18; sequence MNNEDKKLQDEQLQKETV. Positions 1 to 21 are disordered; the sequence is MNNEDKKLQDEQLQKETVEAA.

The protein belongs to the GrpE family. In terms of assembly, homodimer.

Its subcellular location is the cytoplasm. In terms of biological role, participates actively in the response to hyperosmotic and heat shock by preventing the aggregation of stress-denatured proteins, in association with DnaK and GrpE. It is the nucleotide exchange factor for DnaK and may function as a thermosensor. Unfolded proteins bind initially to DnaJ; upon interaction with the DnaJ-bound protein, DnaK hydrolyzes its bound ATP, resulting in the formation of a stable complex. GrpE releases ADP from DnaK; ATP binding to DnaK triggers the release of the substrate protein, thus completing the reaction cycle. Several rounds of ATP-dependent interactions between DnaJ, DnaK and GrpE are required for fully efficient folding. This chain is Protein GrpE, found in Photobacterium profundum (strain SS9).